The primary structure comprises 202 residues: Small ribosomal subunit protein uS4c-1 (202 aa).

The region spanning Met90–Asn152 is the S4 RNA-binding domain.

Belongs to the universal ribosomal protein uS4 family. In terms of assembly, part of the 30S ribosomal subunit. Contacts protein S5. The interaction surface between S4 and S5 is involved in control of translational fidelity.

The protein resides in the plastid. It is found in the chloroplast. Its function is as follows. One of the primary rRNA binding proteins, it binds directly to 16S rRNA where it nucleates assembly of the body of the 30S subunit. Functionally, with S5 and S12 plays an important role in translational accuracy. The sequence is that of Small ribosomal subunit protein uS4c-1 from Cyanidium caldarium (Red alga).